The primary structure comprises 78 residues: D-alanyl carrier protein (78 aa).

The region spanning 1-78 (MEFKNQVYGI…HIAEQLAEMK (78 aa)) is the Carrier domain. An O-(pantetheine 4'-phosphoryl)serine modification is found at S36.

It belongs to the DltC family. Post-translationally, 4'-phosphopantetheine is transferred from CoA to a specific serine of apo-DCP.

It localises to the cytoplasm. The protein operates within cell wall biogenesis; lipoteichoic acid biosynthesis. Functionally, carrier protein involved in the D-alanylation of lipoteichoic acid (LTA). The loading of thioester-linked D-alanine onto DltC is catalyzed by D-alanine--D-alanyl carrier protein ligase DltA. The DltC-carried D-alanyl group is further transferred to cell membrane phosphatidylglycerol (PG) by forming an ester bond, probably catalyzed by DltD. D-alanylation of LTA plays an important role in modulating the properties of the cell wall in Gram-positive bacteria, influencing the net charge of the cell wall. The sequence is that of D-alanyl carrier protein from Bacillus pumilus (strain SAFR-032).